The following is a 360-amino-acid chain: MAEPDLECEQIRLKCIRKEGFFTVPPEHRLGRCRSVKEFEKLNRIGEGTYGIVYRARDTQTDEIVALKKVRMDKEKDGIPISSLREITLLLRLRHPNIVELKEVVVGNHLESIFLVMGYCEQDLASLLENMPTPFSEAQVKCIVLQVLRGLQYLHRNFIIHRDLKVSNLLMTDKGCVKTADFGLARAYGVPVKPMTPKVVTLWYRAPELLLGTTTQTTSIDMWAVGCILAELLAHRPLLPGTSEIHQIDLIVQLLGTPSENIWPGFSKLPLVGQYSLRKQPYNNLKHKFPWLSEAGLRLLHFLFMYDPKKRATAGDCLESSYFKEKPLPCEPELMPTFPHHRNKRAAPATSEGQSKRCKP.

In terms of domain architecture, Protein kinase spans 39–323; sequence FEKLNRIGEG…AGDCLESSYF (285 aa). ATP-binding positions include 45-53 and Lys-68; that span reads IGEGTYGIV. Catalysis depends on Asp-163, which acts as the Proton acceptor. Thr-196 is modified (phosphothreonine). A disordered region spans residues 334 to 360; it reads LMPTFPHHRNKRAAPATSEGQSKRCKP.

Belongs to the protein kinase superfamily. CMGC Ser/Thr protein kinase family. CDC2/CDKX subfamily. As to quaternary structure, heterodimer with CCNQ, the interaction is required for kinase activity. Interacts with ETS2. Interacts with PRK2.

The protein resides in the cytoplasm. The protein localises to the cytoskeleton. It localises to the cilium basal body. It catalyses the reaction L-seryl-[protein] + ATP = O-phospho-L-seryl-[protein] + ADP + H(+). The enzyme catalyses L-threonyl-[protein] + ATP = O-phospho-L-threonyl-[protein] + ADP + H(+). In terms of biological role, cyclin-dependent kinase that phosphorylates the transcription factor ETS2 (in vitro) and positively controls its proteasomal degradation (in cells). Involved in the regulation of actin cytoskeleton organization through the phosphorylation of actin dynamics regulators such as PKN2. Is a negative regulator of ciliogenesis through phosphorylation of PKN2 and promotion of RhoA signaling. This is Cyclin-dependent kinase 10 (CDK10) from Homo sapiens (Human).